The primary structure comprises 184 residues: ATP synthase subunit b, chloroplastic (184 aa).

The helical transmembrane segment at 27–49 (LATNPINLSIVIGVLIFFGKGVL) threads the bilayer.

Belongs to the ATPase B chain family. F-type ATPases have 2 components, F(1) - the catalytic core - and F(0) - the membrane proton channel. F(1) has five subunits: alpha(3), beta(3), gamma(1), delta(1), epsilon(1). F(0) has four main subunits: a(1), b(1), b'(1) and c(10-14). The alpha and beta chains form an alternating ring which encloses part of the gamma chain. F(1) is attached to F(0) by a central stalk formed by the gamma and epsilon chains, while a peripheral stalk is formed by the delta, b and b' chains.

Its subcellular location is the plastid. The protein localises to the chloroplast thylakoid membrane. F(1)F(0) ATP synthase produces ATP from ADP in the presence of a proton or sodium gradient. F-type ATPases consist of two structural domains, F(1) containing the extramembraneous catalytic core and F(0) containing the membrane proton channel, linked together by a central stalk and a peripheral stalk. During catalysis, ATP synthesis in the catalytic domain of F(1) is coupled via a rotary mechanism of the central stalk subunits to proton translocation. In terms of biological role, component of the F(0) channel, it forms part of the peripheral stalk, linking F(1) to F(0). The protein is ATP synthase subunit b, chloroplastic of Lotus japonicus (Lotus corniculatus var. japonicus).